The sequence spans 504 residues: 26S proteasome non-ATPase regulatory subunit 3 (504 aa).

Residues 254–433 enclose the PCI domain; the sequence is ARYMYYQGRI…RDGPRYMQSS (180 aa).

It belongs to the proteasome subunit S3 family. The 26S proteasome is composed of a core protease, known as the 20S proteasome, capped at one or both ends by the 19S regulatory complex (RC). The RC is composed of at least 18 different subunits in two subcomplexes, the base and the lid, which form the portions proximal and distal to the 20S proteolytic core, respectively.

Functionally, acts as a regulatory subunit of the 26 proteasome which is involved in the ATP-dependent degradation of ubiquitinated proteins. The protein is 26S proteasome non-ATPase regulatory subunit 3 (rpn-3) of Caenorhabditis elegans.